We begin with the raw amino-acid sequence, 198 residues long: FMN-dependent NADH:quinone oxidoreductase (198 aa).

FMN is bound by residues Ser-10, 16 to 18 (SQS), 94 to 97 (MYNF), and 138 to 141 (TRGG).

It belongs to the azoreductase type 1 family. In terms of assembly, homodimer. The cofactor is FMN.

It catalyses the reaction 2 a quinone + NADH + H(+) = 2 a 1,4-benzosemiquinone + NAD(+). The catalysed reaction is N,N-dimethyl-1,4-phenylenediamine + anthranilate + 2 NAD(+) = 2-(4-dimethylaminophenyl)diazenylbenzoate + 2 NADH + 2 H(+). Functionally, quinone reductase that provides resistance to thiol-specific stress caused by electrophilic quinones. Its function is as follows. Also exhibits azoreductase activity. Catalyzes the reductive cleavage of the azo bond in aromatic azo compounds to the corresponding amines. The polypeptide is FMN-dependent NADH:quinone oxidoreductase (Shewanella sp. (strain ANA-3)).